A 442-amino-acid chain; its full sequence is 4-hydroxyphenylpyruvate dioxygenase (442 aa).

2 consecutive VOC domains span residues 45 to 200 (RFHH…GFEA) and 216 to 376 (RLDH…IFTK). Positions 219, 301, and 387 each coordinate Fe cation.

Belongs to the 4HPPD family. Requires Fe cation as cofactor.

It is found in the cytoplasm. The enzyme catalyses 3-(4-hydroxyphenyl)pyruvate + O2 = homogentisate + CO2. It participates in amino-acid degradation; L-phenylalanine degradation; acetoacetate and fumarate from L-phenylalanine: step 3/6. It functions in the pathway cofactor biosynthesis; prenylquinone biosynthesis. This Daucus carota (Wild carrot) protein is 4-hydroxyphenylpyruvate dioxygenase.